The primary structure comprises 885 residues: Disease resistance protein RFL1 (885 aa).

Positions serine 27–glutamate 61 form a coiled coil. One can recognise an NB-ARC domain in the interval glutamate 141–glycine 443. Glycine 183–threonine 190 contacts ATP. 7 LRR repeats span residues alanine 517 to valine 538, glutamate 539 to cysteine 561, serine 564 to leucine 586, serine 588 to arginine 610, lysine 611 to serine 633, serine 634 to leucine 655, and leucine 657 to tyrosine 679.

This sequence belongs to the disease resistance NB-LRR family.

Disease resistance (R) protein. The sequence is that of Disease resistance protein RFL1 (RFL1) from Arabidopsis thaliana (Mouse-ear cress).